A 125-amino-acid polypeptide reads, in one-letter code: Protein ApaG (125 aa).

The 125-residue stretch at 1–125 folds into the ApaG domain; sequence MINAPRVCVQ…FRLAIPSLIH (125 aa).

In Pectobacterium carotovorum subsp. carotovorum (strain PC1), this protein is Protein ApaG.